The chain runs to 622 residues: MSRSGDRTSTFDPSHSDNLLHGLNLLWRKQLFCDVTLTAQGQQFHCHKAVLASCSQYFRSLFSSGGGHPHALALGPGAQDGLGGAPPKEPPPPPQEEPGTPSSSPEDKLLASPRAINNLVLQGCSSIGLRLVLEYLYTANVTLSLDTVEEVLSVSKILHIPQVTKLCVQFLNDQISVQNYKQVCKIAALHGLEETKKLANKYLVEDVLLLNFEEMRALLDSLPPPVESELALFQMSVLWLEHDRETRMQYAPDLMKRLRFALIPAPELVERVQSVDFMRTDPVCQKLLLDAMNYHLMPFRQHCRQSLASRIRSNKKMLLLVGGLPPGPDRLPSNLVQYYDDEKKTWKILTIMPYNSAHHCVVEVENFLFVLGGEDQWNPNGKHSTNFVSRYDPRFNSWIQLPPMQERRASFYACRLDKNLYVIGGRNETGYLSSVECYNLETNEWRYVSSLPQPLAAHAGAVHNGKIYISGGVHNGEYVPWLYCYDPVMDVWARKQDMNTKRAIHTLAVMNDRLYAIGGNHLKGFSHLDVMLVECYDPKGDQWNILQTPILEGRSGPGCAVLDDSIYLVGGYSWSMGAYKSSTICYSPEKGTWTELEGDVAEPLAGPACSTVILPACVPYNK.

The 113-residue stretch at 33 to 145 (CDVTLTAQGQ…LYTANVTLSL (113 aa)) folds into the BTB domain. The tract at residues 73–108 (ALGPGAQDGLGGAPPKEPPPPPQEEPGTPSSSPEDK) is disordered. Over residues 87–96 (PKEPPPPPQE) the composition is skewed to pro residues. 6 Kelch repeats span residues 317–366 (MLLL…EVEN), 367–418 (FLFV…RLDK), 419–465 (NLYV…VHNG), 467–512 (IYIS…VMND), 514–564 (LYAI…VLDD), and 566–614 (IYLV…TVIL).

Its subcellular location is the cytoplasm. It is found in the cytosol. The protein resides in the endoplasmic reticulum membrane. In Gallus gallus (Chicken), this protein is Kelch-like protein 14 (KLHL14).